Reading from the N-terminus, the 287-residue chain is 4-diphosphocytidyl-2-C-methyl-D-erythritol kinase (287 aa).

Lysine 12 is a catalytic residue. Residue 94 to 104 participates in ATP binding; the sequence is PAQAGMGGGSS. Aspartate 136 is a catalytic residue.

This sequence belongs to the GHMP kinase family. IspE subfamily.

The catalysed reaction is 4-CDP-2-C-methyl-D-erythritol + ATP = 4-CDP-2-C-methyl-D-erythritol 2-phosphate + ADP + H(+). It participates in isoprenoid biosynthesis; isopentenyl diphosphate biosynthesis via DXP pathway; isopentenyl diphosphate from 1-deoxy-D-xylulose 5-phosphate: step 3/6. Functionally, catalyzes the phosphorylation of the position 2 hydroxy group of 4-diphosphocytidyl-2C-methyl-D-erythritol. The protein is 4-diphosphocytidyl-2-C-methyl-D-erythritol kinase of Albidiferax ferrireducens (strain ATCC BAA-621 / DSM 15236 / T118) (Rhodoferax ferrireducens).